The chain runs to 484 residues: UDP-N-acetylmuramoyl-L-alanyl-D-glutamate--2,6-diaminopimelate ligase (484 aa).

S30 provides a ligand contact to UDP-N-acetyl-alpha-D-muramoyl-L-alanyl-D-glutamate. ATP is bound at residue 111–117; that stretch reads GTNGKTT. Residues 153–154, S180, Q186, and R188 each bind UDP-N-acetyl-alpha-D-muramoyl-L-alanyl-D-glutamate; that span reads TT. K220 bears the N6-carboxylysine mark. Meso-2,6-diaminopimelate-binding positions include R378, 402–405, G455, and E459; that span reads DNPR. A Meso-diaminopimelate recognition motif motif is present at residues 402–405; sequence DNPR.

This sequence belongs to the MurCDEF family. MurE subfamily. The cofactor is Mg(2+). Post-translationally, carboxylation is probably crucial for Mg(2+) binding and, consequently, for the gamma-phosphate positioning of ATP.

It localises to the cytoplasm. The enzyme catalyses UDP-N-acetyl-alpha-D-muramoyl-L-alanyl-D-glutamate + meso-2,6-diaminopimelate + ATP = UDP-N-acetyl-alpha-D-muramoyl-L-alanyl-gamma-D-glutamyl-meso-2,6-diaminopimelate + ADP + phosphate + H(+). The protein operates within cell wall biogenesis; peptidoglycan biosynthesis. Functionally, catalyzes the addition of meso-diaminopimelic acid to the nucleotide precursor UDP-N-acetylmuramoyl-L-alanyl-D-glutamate (UMAG) in the biosynthesis of bacterial cell-wall peptidoglycan. The polypeptide is UDP-N-acetylmuramoyl-L-alanyl-D-glutamate--2,6-diaminopimelate ligase (Phocaeicola vulgatus (strain ATCC 8482 / DSM 1447 / JCM 5826 / CCUG 4940 / NBRC 14291 / NCTC 11154) (Bacteroides vulgatus)).